We begin with the raw amino-acid sequence, 447 residues long: N-succinylarginine dihydrolase (447 aa).

Substrate-binding positions include 19-28 (AGLSFGNEAS), asparagine 110, and 137-138 (HR). Glutamate 174 is an active-site residue. Arginine 212 lines the substrate pocket. Histidine 248 is an active-site residue. Residues aspartate 250 and asparagine 359 each coordinate substrate. Catalysis depends on cysteine 365, which acts as the Nucleophile.

Belongs to the succinylarginine dihydrolase family. Homodimer.

The catalysed reaction is N(2)-succinyl-L-arginine + 2 H2O + 2 H(+) = N(2)-succinyl-L-ornithine + 2 NH4(+) + CO2. The protein operates within amino-acid degradation; L-arginine degradation via AST pathway; L-glutamate and succinate from L-arginine: step 2/5. Functionally, catalyzes the hydrolysis of N(2)-succinylarginine into N(2)-succinylornithine, ammonia and CO(2). In Salmonella heidelberg (strain SL476), this protein is N-succinylarginine dihydrolase.